The sequence spans 705 residues: Probable E3 ubiquitin-protein ligase MID2 (705 aa).

The RING-type zinc finger occupies Cys-30–Arg-80. A B box-type 1; degenerate zinc finger spans residues Ile-137–Pro-184. Residues Leu-190 to Leu-232 form a B box-type 2 zinc finger. 4 residues coordinate Zn(2+): Cys-195, His-198, Cys-218, and His-224. Residues Asn-233 to Ala-301 adopt a coiled-coil conformation. A COS domain is found at Leu-340–Leu-399. The Fibronectin type-III domain maps to Pro-404–Gln-504. The B30.2/SPRY domain maps to Ile-486–Phe-679.

The protein belongs to the TRIM/RBCC family. In terms of assembly, homodimer or heterodimer with MID1. Interacts with IGBP1. Phosphorylated on serine and threonine residues. In terms of tissue distribution, low abundance in brain and lung, with even lower levels in heart, liver, and kidney.

The protein localises to the cytoplasm. The protein resides in the cytoskeleton. The catalysed reaction is S-ubiquitinyl-[E2 ubiquitin-conjugating enzyme]-L-cysteine + [acceptor protein]-L-lysine = [E2 ubiquitin-conjugating enzyme]-L-cysteine + N(6)-ubiquitinyl-[acceptor protein]-L-lysine.. It participates in protein modification; protein ubiquitination. Functionally, E3 ubiquitin ligase that plays a role in microtubule stabilization. Mediates the 'Lys-48'-linked polyubiquitination of LRRK2 to drive its localization to microtubules and its proteasomal degradation in neurons. This ubiquitination inhibits LRRK2 kinase activation by RAB29. This is Probable E3 ubiquitin-protein ligase MID2 (Mid2) from Mus musculus (Mouse).